The sequence spans 748 residues: MIRDLSKMYRRRAHPAPHQPAQPFKFTISESCDRIKEEFQFLQAQYHSLKLECEKLASEKTEMQRHYVMYYEMSYGLNIEMHKQAEIVKRLNAICAQVIPCLSQEQQQLQAQHLLTWTWSACASDTTPLGFSQPFHPSGSSAGLLALSSALGGQSHLPIKDEKKHHDNDHQRDRDSIKSSSVSPSASFRGSEKHRNSTDYSSESKKQKTEEKEIAARYDSDGEKSDDNLVVDVSNEDPSSPRGSPAHSPRENGLDKTRLLKKDAPISPASVASSSSTPSSKSKELSLNEKSTTPVSKSNTPTPRTDAPTPGSNSTPGLRPVPGKPPGVDPLASSLRTPMAVPCPYPTPFGIVPHAGMNGELTSPGAAYAGLHNISPQMSAAAAAAAAAAAYGRSPVVGFDPHHHMRVPAIPPNLTGIPGGKPAYSFHVSADGQMQPVPFPPDALIGPGIPRHARQINTLNHGEVVCAVTISNPTRHVYTGGKGCVKVWDITDPGNKSPVSQLDCLNRDNYIRSCRLLPDGRTLIVGGEASTLSIWDLAAPTPRIKAELTSSAPACYALAISPDSKVCFSCCSDGNIAVWDLHNQTLVRQFQGHTDGASCIDISNDGTKLWTGGLDNTVRSWDLREGRQLQQHDFTSQIFSLGYCPTGEWLAVGMENSNVEVLHVTKPDKYQLHLHESCVLSLKFAHCGKWFVRPGKDNLLNAWRTPYGASIFQSKESSSVLSCDISADDKYIVTGSGDKKATVYEVIY.

Disordered stretches follow at residues 1–20 (MIRD…PHQP) and 157–332 (LPIK…DPLA). Residues 1-112 (MIRDLSKMYR…SQEQQQLQAQ (112 aa)) are q domain. A GP domain region spans residues 113–179 (HLLTWTWSAC…HQRDRDSIKS (67 aa)). Over residues 158–177 (PIKDEKKHHDNDHQRDRDSI) the composition is skewed to basic and acidic residues. A compositionally biased stretch (low complexity) spans 178-189 (KSSSVSPSASFR). The segment at 180-249 (SSVSPSASFR…SPRGSPAHSP (70 aa)) is ccN domain. Residues Ser183, Ser187, Ser191, and Ser197 each carry the phosphoserine modification. A compositionally biased stretch (basic and acidic residues) spans 190 to 227 (GSEKHRNSTDYSSESKKQKTEEKEIAARYDSDGEKSDD). The residue at position 212 (Lys212) is an N6-acetyllysine. Ser220 bears the Phosphoserine mark. Ser225 is modified (phosphoserine; by CK2). Ser240 is modified (phosphoserine; by CDK1). Ser244 and Ser248 each carry phosphoserine. Residues 248-264 (SPRENGLDKTRLLKKDA) are compositionally biased toward basic and acidic residues. Positions 250–427 (RENGLDKTRL…PGGKPAYSFH (178 aa)) are SP domain. Lys256 bears the N6-acetyllysine mark. Over residues 265-280 (PISPASVASSSSTPSS) the composition is skewed to low complexity. At Ser267 the chain carries Phosphoserine. Residues 292–303 (TTPVSKSNTPTP) show a composition bias toward polar residues. Thr293 is subject to Phosphothreonine. Phosphoserine is present on residues Ser296 and Ser298. 4 positions are modified to phosphothreonine: Thr300, Thr302, Thr309, and Thr315. Ser394 is modified (phosphoserine). WD repeat units follow at residues 460 to 498 (NHGE…NKSP), 506 to 545 (NRDN…PRIK), 550 to 589 (SSAP…LVRQ), 592 to 631 (GHTD…QLQQ), 633 to 672 (DFTS…KYQL), 674 to 713 (LHES…SIFQ), and 715 to 748 (KESS…EVIY).

This sequence belongs to the WD repeat Groucho/TLE family. In terms of assembly, homooligomer and heterooligomer with other family members. Binds PAX5, LEF1, TCF7, TCF7L1 and TCF7L2. Interacts with ZNF703; TLE4 may mediate ZNF703 transcriptional repression. Interacts with SIX3 and SIX6. Interacts with PAX2. Post-translationally, phosphorylated. PAX5 binding increases phosphorylation. Ubiquitinated by XIAP/BIRC4.

The protein localises to the nucleus. Transcriptional corepressor that binds to a number of transcription factors. Inhibits the transcriptional activation mediated by PAX5, and by CTNNB1 and TCF family members in Wnt signaling. The effects of full-length TLE family members may be modulated by association with dominant-negative AES. Essential for the transcriptional repressor activity of SIX3 during retina and lens development and for SIX3 transcriptional auto-repression. Involved in transcriptional repression of GNRHR and enhances MSX1-mediated transcriptional repression of CGA/alpha-GSU. The polypeptide is Transducin-like enhancer protein 4 (Tle4) (Rattus norvegicus (Rat)).